Consider the following 492-residue polypeptide: Dynein regulatory complex subunit 2 (492 aa).

3 coiled-coil regions span residues 16–95 (LTEE…FERV), 256–318 (VQSA…AAQA), and 373–401 (LSEEEQKQEKAKAMESSNEKLTQLMHDYS).

This sequence belongs to the DRC2 family. In terms of assembly, component of the nexin-dynein regulatory complex (N-DRC).

Its subcellular location is the cytoplasm. The protein resides in the cytoskeleton. It localises to the flagellum basal body. The protein localises to the cell projection. It is found in the cilium. Its subcellular location is the flagellum. The protein resides in the flagellum axoneme. Functionally, component of the nexin-dynein regulatory complex (N-DRC), a key regulator of ciliary/flagellar motility which maintains the alignment and integrity of the distal axoneme and regulates microtubule sliding in motile axonemes. Plays a critical role in the assembly of N-DRC and also stabilizes the assembly of multiple inner dynein arms and radial spokes. Coassembles with DRC1 to form a central scaffold needed for assembly of the N-DRC and its attachment to the outer doublet microtubules. In Danio rerio (Zebrafish), this protein is Dynein regulatory complex subunit 2 (ccdc65).